A 166-amino-acid polypeptide reads, in one-letter code: MFPMVTEFMNYGQQTVRAARYIGQGFMITLSHANRLPVTIQYPYEKLITSERFRGRIHFEFDKCIACEVCVRVCPIDLPVVDWKLETHIRKKRLLNYSIDFGICIFCGNCVEYCPTNCLSMTEEYELSTYDRHELNYNQIALGRLPMSIIDDYTIRTILNLPEIKT.

2 consecutive 4Fe-4S ferredoxin-type domains span residues 55–84 (GRIHFEFDKCIACEVCVRVCPIDLPVVDWK) and 95–124 (LNYSIDFGICIFCGNCVEYCPTNCLSMTEE). The [4Fe-4S] cluster site is built by cysteine 64, cysteine 67, cysteine 70, cysteine 74, cysteine 104, cysteine 107, cysteine 110, and cysteine 114.

It belongs to the complex I 23 kDa subunit family. NDH is composed of at least 16 different subunits, 5 of which are encoded in the nucleus. It depends on [4Fe-4S] cluster as a cofactor.

Its subcellular location is the plastid. The protein localises to the chloroplast thylakoid membrane. It catalyses the reaction a plastoquinone + NADH + (n+1) H(+)(in) = a plastoquinol + NAD(+) + n H(+)(out). The enzyme catalyses a plastoquinone + NADPH + (n+1) H(+)(in) = a plastoquinol + NADP(+) + n H(+)(out). Functionally, NDH shuttles electrons from NAD(P)H:plastoquinone, via FMN and iron-sulfur (Fe-S) centers, to quinones in the photosynthetic chain and possibly in a chloroplast respiratory chain. The immediate electron acceptor for the enzyme in this species is believed to be plastoquinone. Couples the redox reaction to proton translocation, and thus conserves the redox energy in a proton gradient. This chain is NAD(P)H-quinone oxidoreductase subunit I, chloroplastic, found in Tridax balbisioides (Coatbuttons).